A 327-amino-acid polypeptide reads, in one-letter code: Malate dehydrogenase (327 aa).

11–17 (GAAGQIS) serves as a coordination point for NAD(+). Positions 92 and 98 each coordinate substrate. Residues Asn-105, Gln-112, and 129–131 (VGN) each bind NAD(+). 2 residues coordinate substrate: Asn-131 and Arg-162. His-187 acts as the Proton acceptor in catalysis.

It belongs to the LDH/MDH superfamily. MDH type 2 family.

The enzyme catalyses (S)-malate + NAD(+) = oxaloacetate + NADH + H(+). Functionally, catalyzes the reversible oxidation of malate to oxaloacetate. This Cellvibrio japonicus (strain Ueda107) (Pseudomonas fluorescens subsp. cellulosa) protein is Malate dehydrogenase.